The sequence spans 500 residues: MPPAVGGPVGYTPPDGGWGWAVVIGAFISIGFSYAFPKSITVFFKEIEGIFHATTSEVSWISSIMLAVMYGGGPISSILVNKYGSRIVMIVGGCLSGCGLIAASFCNTVQQLYVCIGVIGGLGLAFNLNPALTMIGKYFYKRRPLANGLAMAGSPVFLCTLAPLNQVFFGIFGWRGSFLILGGLLLNCCVAGALMRPIGPKPTKAGKDKSKASLEKAGKSGVKKDLHDANTDLIGRHPKQEKRSVFQTINQFLDLTLFTHRGFLLYLSGNVIMFFGLFAPLVFLSSYGKSQHYSSEKSAFLLSILAFVDMVARPSMGLVANTKPIRPRIQYFFAASVVANGVCHMLAPLSTTYVGFCVYAGFFGFAFGWLSSVLFETLMDLVGPQRFSSAVGLVTIVECCPVLLGPPLLGRLNDMYGDYKYTYWACGVVLIISGIYLFIGMGINYRLLAKEQKANEQKKESKEEETSIDVAGKPNEVTKAAESPDQKDTDGGPKEEESPV.

At 1–22 (MPPAVGGPVGYTPPDGGWGWAV) the chain is on the cytoplasmic side. The helical transmembrane segment at 23-44 (VIGAFISIGFSYAFPKSITVFF) threads the bilayer. K38 provides a ligand contact to (S)-lactate. The Extracellular portion of the chain corresponds to 45-55 (KEIEGIFHATT). The chain crosses the membrane as a helical span at residues 56-80 (SEVSWISSIMLAVMYGGGPISSILV). The Cytoplasmic portion of the chain corresponds to 81 to 84 (NKYG). A helical membrane pass occupies residues 85-105 (SRIVMIVGGCLSGCGLIAASF). Residues 106 to 109 (CNTV) lie on the Extracellular side of the membrane. The chain crosses the membrane as a helical span at residues 110–132 (QQLYVCIGVIGGLGLAFNLNPAL). The Cytoplasmic portion of the chain corresponds to 133-146 (TMIGKYFYKRRPLA). The helical transmembrane segment at 147–169 (NGLAMAGSPVFLCTLAPLNQVFF) threads the bilayer. Residues 170–174 (GIFGW) lie on the Extracellular side of the membrane. The helical transmembrane segment at 175 to 194 (RGSFLILGGLLLNCCVAGAL) threads the bilayer. At 195 to 261 (MRPIGPKPTK…FLDLTLFTHR (67 aa)) the chain is on the cytoplasmic side. 2 positions are modified to phosphoserine: S210 and S213. Phosphothreonine is present on T231. The chain crosses the membrane as a helical span at residues 262-288 (GFLLYLSGNVIMFFGLFAPLVFLSSYG). Residues 289 to 295 (KSQHYSS) are Extracellular-facing. The helical transmembrane segment at 296 to 317 (EKSAFLLSILAFVDMVARPSMG) threads the bilayer. Residue D309 participates in H(+) binding. R313 contacts (S)-lactate. Topologically, residues 318–328 (LVANTKPIRPR) are cytoplasmic. The chain crosses the membrane as a helical span at residues 329-349 (IQYFFAASVVANGVCHMLAPL). Residues 350 to 353 (STTY) lie on the Extracellular side of the membrane. Residues 354 to 375 (VGFCVYAGFFGFAFGWLSSVLF) traverse the membrane as a helical segment. Residues 376–389 (ETLMDLVGPQRFSS) lie on the Cytoplasmic side of the membrane. A helical transmembrane segment spans residues 390–410 (AVGLVTIVECCPVLLGPPLLG). The Extracellular portion of the chain corresponds to 411-421 (RLNDMYGDYKY). Residues 422–443 (TYWACGVVLIISGIYLFIGMGI) traverse the membrane as a helical segment. The Cytoplasmic segment spans residues 444–500 (NYRLLAKEQKANEQKKESKEEETSIDVAGKPNEVTKAAESPDQKDTDGGPKEEESPV). A compositionally biased stretch (basic and acidic residues) spans 454 to 465 (ANEQKKESKEEE). Residues 454–500 (ANEQKKESKEEETSIDVAGKPNEVTKAAESPDQKDTDGGPKEEESPV) are disordered. S461 is subject to Phosphoserine. T466 is modified (phosphothreonine). Phosphoserine occurs at positions 467, 483, and 498. Positions 482–500 (ESPDQKDTDGGPKEEESPV) are enriched in basic and acidic residues.

It belongs to the major facilitator superfamily. Monocarboxylate porter (TC 2.A.1.13) family. Interacts with EMB; interaction mediates SLC16A1 targeting to the plasma membrane. Interacts with isoform 2 of BSG; interaction mediates SLC16A1 targeting to the plasma membrane. In terms of tissue distribution, widely expressed. Detected in heart and in blood lymphocytes and monocytes (at protein level).

The protein resides in the cell membrane. It localises to the basolateral cell membrane. Its subcellular location is the apical cell membrane. It carries out the reaction (S)-lactate(in) + H(+)(in) = (S)-lactate(out) + H(+)(out). The catalysed reaction is acetate(out) + H(+)(out) = acetate(in) + H(+)(in). It catalyses the reaction acetoacetate(out) + H(+)(out) = acetoacetate(in) + H(+)(in). The enzyme catalyses pyruvate(out) + H(+)(out) = pyruvate(in) + H(+)(in). It carries out the reaction (R)-3-hydroxybutanoate(out) + H(+)(out) = (R)-3-hydroxybutanoate(in) + H(+)(in). The catalysed reaction is 3-methyl-2-oxobutanoate(out) + H(+)(out) = 3-methyl-2-oxobutanoate(in) + H(+)(in). It catalyses the reaction 4-methyl-2-oxopentanoate(out) + H(+)(out) = 4-methyl-2-oxopentanoate(in) + H(+)(in). The enzyme catalyses succinate(in) + 2 H(+)(in) = succinate(out) + 2 H(+)(out). With respect to regulation, selectively inhibited by AZD3965, that acts as a competitive inhibitor binding to the central channel in the outward open conformation. Functionally, bidirectional proton-coupled monocarboxylate transporter. Catalyzes the rapid transport across the plasma membrane of many monocarboxylates such as lactate, pyruvate, acetate and the ketone bodies acetoacetate and beta-hydroxybutyrate, and thus contributes to the maintenance of intracellular pH. The transport direction is determined by the proton motive force and the concentration gradient of the substrate monocarboxylate. MCT1 is a major lactate exporter. Plays a role in cellular responses to a high-fat diet by modulating the cellular levels of lactate and pyruvate that contribute to the regulation of central metabolic pathways and insulin secretion, with concomitant effects on plasma insulin levels and blood glucose homeostasis. Facilitates the protonated monocarboxylate form of succinate export, that its transient protonation upon muscle cell acidification in exercising muscle and ischemic heart. Functions via alternate outward- and inward-open conformation states. Protonation and deprotonation of 309-Asp is essential for the conformational transition. The protein is Monocarboxylate transporter 1 of Homo sapiens (Human).